We begin with the raw amino-acid sequence, 188 residues long: Apolipoprotein M (188 aa).

Residues 1 to 22 (MFHQIWAALLYFYGIILNSIYQ) constitute a signal peptide (not cleaved). 3 disulfide bridges follow: cysteine 23/cysteine 167, cysteine 95/cysteine 183, and cysteine 128/cysteine 157. N-linked (GlcNAc...) asparagine glycosylation occurs at asparagine 135. Residues glutamate 136 and arginine 143 each coordinate tetradecanoate.

The protein belongs to the calycin superfamily. Lipocalin family. Highly divergent. As to quaternary structure, interacts with LRP2; LRP2 mediates APOM renal uptake and subsequent lysosomal degradation.

It is found in the secreted. Probably involved in lipid transport. Can bind sphingosine-1-phosphate, myristic acid, palmitic acid and stearic acid, retinol, all-trans-retinoic acid and 9-cis-retinoic acid. This Pongo abelii (Sumatran orangutan) protein is Apolipoprotein M (APOM).